The sequence spans 472 residues: MPDVKKRKIAHEAPEHGSDAESTSSHESVAQQDDTAETQDEAAATETRPAPKSFKDLGIIDQLCEACETMGYKAPTPIQAESIPLALQGRDLIGLAETGSGKTAAFALPILQALMEKPQSFFGLILAPTRELAFQISKSFESLGSTINVRCAVIVGGMDMVSQSIALGKKPHIIVATPGRLLDHLENTKGFSLRTLKYLVMDEADRLLDMDFGPLLDKILKVLPRERRTFLFSATMSSKVESLQRASLSNPLRVSVSSNKYQTVSTLLQSYLFLPHKHKDIYLVYLLNEFVGQSAIIFTRTVHETQRISFLLRSLGFGAIPLHGQLSQSARLGALGKFRSRSRDILVATDVAARGLDIPSVDVVLNFDLPTDSKTYVHRVGRTARAGKSGVAISFVTQYDVEIWLRIEGALGKKLKEYELEKDEVMVLAERVGEAQRQAIVEMKNFDEKRGTKAKKFGKGKRSRDEMDQEEG.

Positions 1-51 (MPDVKKRKIAHEAPEHGSDAESTSSHESVAQQDDTAETQDEAAATETRPAP) are disordered. The segment covering 10-19 (AHEAPEHGSD) has biased composition (basic and acidic residues). The segment covering 20-29 (AESTSSHESV) has biased composition (polar residues). The Q motif motif lies at 52-80 (KSFKDLGIIDQLCEACETMGYKAPTPIQA). The Helicase ATP-binding domain maps to 83-254 (IPLALQGRDL…RASLSNPLRV (172 aa)). Position 96–103 (96–103 (AETGSGKT)) interacts with ATP. The DEAD box motif lies at 202 to 205 (DEAD). Residues 282–426 (YLVYLLNEFV…EYELEKDEVM (145 aa)) form the Helicase C-terminal domain. The disordered stretch occupies residues 451–472 (GTKAKKFGKGKRSRDEMDQEEG). A compositionally biased stretch (basic residues) spans 452-462 (TKAKKFGKGKR).

Belongs to the DEAD box helicase family. DDX47/RRP3 subfamily. In terms of assembly, interacts with the SSU processome.

It is found in the nucleus. It catalyses the reaction ATP + H2O = ADP + phosphate + H(+). In terms of biological role, ATP-dependent rRNA helicase required for pre-ribosomal RNA processing. Involved in the maturation of the 35S-pre-rRNA and to its cleavage to mature 18S rRNA. In Neosartorya fischeri (strain ATCC 1020 / DSM 3700 / CBS 544.65 / FGSC A1164 / JCM 1740 / NRRL 181 / WB 181) (Aspergillus fischerianus), this protein is ATP-dependent rRNA helicase rrp3.